Consider the following 224-residue polypeptide: Protein PLANT CADMIUM RESISTANCE 6 (224 aa).

The helical transmembrane segment at 131–151 (GMLYGLICCLFAIPCVYTCTF) threads the bilayer.

It belongs to the cornifelin family.

Its subcellular location is the membrane. In terms of biological role, may be involved in heavy metals transport. This Arabidopsis thaliana (Mouse-ear cress) protein is Protein PLANT CADMIUM RESISTANCE 6 (PCR6).